The primary structure comprises 161 residues: 2-C-methyl-D-erythritol 2,4-cyclodiphosphate synthase (161 aa).

Aspartate 10 and histidine 12 together coordinate a divalent metal cation. Residues 10–12 (DVH) and 36–37 (HS) contribute to the 4-CDP-2-C-methyl-D-erythritol 2-phosphate site. Histidine 44 is a binding site for a divalent metal cation. 4-CDP-2-C-methyl-D-erythritol 2-phosphate-binding positions include 58-60 (DIG), 134-137 (TTTE), phenylalanine 141, and arginine 144.

It belongs to the IspF family. Homotrimer. The cofactor is a divalent metal cation.

It carries out the reaction 4-CDP-2-C-methyl-D-erythritol 2-phosphate = 2-C-methyl-D-erythritol 2,4-cyclic diphosphate + CMP. Its pathway is isoprenoid biosynthesis; isopentenyl diphosphate biosynthesis via DXP pathway; isopentenyl diphosphate from 1-deoxy-D-xylulose 5-phosphate: step 4/6. Involved in the biosynthesis of isopentenyl diphosphate (IPP) and dimethylallyl diphosphate (DMAPP), two major building blocks of isoprenoid compounds. Catalyzes the conversion of 4-diphosphocytidyl-2-C-methyl-D-erythritol 2-phosphate (CDP-ME2P) to 2-C-methyl-D-erythritol 2,4-cyclodiphosphate (ME-CPP) with a corresponding release of cytidine 5-monophosphate (CMP). The polypeptide is 2-C-methyl-D-erythritol 2,4-cyclodiphosphate synthase (Parabacteroides distasonis (strain ATCC 8503 / DSM 20701 / CIP 104284 / JCM 5825 / NCTC 11152)).